An 86-amino-acid polypeptide reads, in one-letter code: MQLKIQLLMLVLMTVLTGVLGKDGYVVHEDTNCKYSCDVFKKWKYCSPLCQKKGAETGYCYSFACWCVGLPEETLVYGDKGTYCWE.

An N-terminal signal peptide occupies residues Met1 to Gly21. In terms of domain architecture, LCN-type CS-alpha/beta spans Lys22–Trp85. 4 disulfide bridges follow: Cys33–Cys84, Cys37–Cys60, Cys46–Cys65, and Cys50–Cys67.

It belongs to the long (4 C-C) scorpion toxin superfamily. Sodium channel inhibitor family. Alpha subfamily. As to expression, expressed by the venom gland.

The protein localises to the secreted. Functionally, binds voltage-independently at site-3 of voltage-gated sodium channels (Nav) and inhibits the inactivation of the activated channels, thereby blocking neuronal transmission. The polypeptide is Neurotoxin LmNaTx35.2 (Lychas mucronatus (Chinese swimming scorpion)).